The following is a 458-amino-acid chain: Argininosuccinate lyase (458 aa).

The protein belongs to the lyase 1 family. Argininosuccinate lyase subfamily.

Its subcellular location is the cytoplasm. It carries out the reaction 2-(N(omega)-L-arginino)succinate = fumarate + L-arginine. Its pathway is amino-acid biosynthesis; L-arginine biosynthesis; L-arginine from L-ornithine and carbamoyl phosphate: step 3/3. The sequence is that of Argininosuccinate lyase from Actinobacillus pleuropneumoniae serotype 5b (strain L20).